The following is a 96-amino-acid chain: Large ribosomal subunit protein uL23 (96 aa).

This sequence belongs to the universal ribosomal protein uL23 family. In terms of assembly, part of the 50S ribosomal subunit. Contacts protein L29, and trigger factor when it is bound to the ribosome.

One of the early assembly proteins it binds 23S rRNA. One of the proteins that surrounds the polypeptide exit tunnel on the outside of the ribosome. Forms the main docking site for trigger factor binding to the ribosome. The protein is Large ribosomal subunit protein uL23 of Desulfovibrio desulfuricans (strain ATCC 27774 / DSM 6949 / MB).